Reading from the N-terminus, the 114-residue chain is Probable prefoldin subunit 2 (114 aa).

Belongs to the prefoldin subunit beta family. As to quaternary structure, heterohexamer of two PFD-alpha type and four PFD-beta type subunits.

Functionally, binds specifically to cytosolic chaperonin (c-CPN) and transfers target proteins to it. Binds to nascent polypeptide chain and promotes folding in an environment in which there are many competing pathways for nonnative proteins. This is Probable prefoldin subunit 2 from Schizosaccharomyces pombe (strain 972 / ATCC 24843) (Fission yeast).